Reading from the N-terminus, the 309-residue chain is Formimidoylglutamase (309 aa).

Mn(2+) contacts are provided by histidine 120, aspartate 145, histidine 147, aspartate 149, aspartate 236, and aspartate 238.

This sequence belongs to the arginase family. Requires Mn(2+) as cofactor.

It catalyses the reaction N-formimidoyl-L-glutamate + H2O = formamide + L-glutamate. It functions in the pathway amino-acid degradation; L-histidine degradation into L-glutamate; L-glutamate from N-formimidoyl-L-glutamate (hydrolase route): step 1/1. In terms of biological role, catalyzes the conversion of N-formimidoyl-L-glutamate to L-glutamate and formamide. This is Formimidoylglutamase from Chromobacterium violaceum (strain ATCC 12472 / DSM 30191 / JCM 1249 / CCUG 213 / NBRC 12614 / NCIMB 9131 / NCTC 9757 / MK).